Consider the following 312-residue polypeptide: Serine/threonine-protein phosphatase PP1 isozyme 2 (312 aa).

At A2 the chain carries N-acetylalanine. Mn(2+) contacts are provided by D70, H72, D98, and N130. H131 functions as the Proton donor in the catalytic mechanism. Mn(2+) is bound by residues H179 and H254.

Belongs to the PPP phosphatase family. PP-1 subfamily. In terms of assembly, interacts with SRK2D/SNRK2.2 and SRK2E/SNRK2.6. Mn(2+) serves as cofactor.

The protein localises to the nucleus. The protein resides in the cytoplasm. It catalyses the reaction O-phospho-L-seryl-[protein] + H2O = L-seryl-[protein] + phosphate. It carries out the reaction O-phospho-L-threonyl-[protein] + H2O = L-threonyl-[protein] + phosphate. With respect to regulation, phosphatase activity is strongly reduced by the protein phosphatase inhibitor 2 (I-2). Serine/threonine-protein phosphatase that possesses phosphatase activity toward para-nitrophenyl phosphate (pNPP) in vitro. The protein is Serine/threonine-protein phosphatase PP1 isozyme 2 of Arabidopsis thaliana (Mouse-ear cress).